Consider the following 351-residue polypeptide: Ribosomal RNA large subunit methyltransferase M (351 aa).

S-adenosyl-L-methionine contacts are provided by residues Ser-183, 216-219 (APGG), Asp-235, Asp-255, and Asp-271. Lys-300 functions as the Proton acceptor in the catalytic mechanism.

Belongs to the class I-like SAM-binding methyltransferase superfamily. RNA methyltransferase RlmE family. RlmM subfamily. Monomer.

It is found in the cytoplasm. It carries out the reaction cytidine(2498) in 23S rRNA + S-adenosyl-L-methionine = 2'-O-methylcytidine(2498) in 23S rRNA + S-adenosyl-L-homocysteine + H(+). Catalyzes the 2'-O-methylation at nucleotide C2498 in 23S rRNA. The polypeptide is Ribosomal RNA large subunit methyltransferase M (Ectopseudomonas mendocina (strain ymp) (Pseudomonas mendocina)).